Reading from the N-terminus, the 733-residue chain is Probable Rho-GTPase-activating protein 6 (733 aa).

A compositionally biased stretch (polar residues) spans 116–125; it reads VFNESKSSSP. The disordered stretch occupies residues 116-135; it reads VFNESKSSSPPDAHTDKYFT. At Thr-141 the chain carries Phosphothreonine. Residues 174–256 form a disordered region; the sequence is RFDKPSNNGP…SKGSWSSILR (83 aa). Positions 179–195 are enriched in low complexity; sequence SNNGPLGRSSLNLSSLS. Composition is skewed to polar residues over residues 196–218 and 225–240; these read HELQ…SSDT and PPSS…ASQD. One can recognise a Rho-GAP domain in the interval 312-546; it reads TNLCKFTFPT…GLIIHWPEVL (235 aa). A disordered region spans residues 692–713; that stretch reads PVTVTASSETNKKSQKINKKAS. The span at 704–713 shows a compositional bias: basic residues; the sequence is KSQKINKKAS.

The protein is Probable Rho-GTPase-activating protein 6 (rga6) of Schizosaccharomyces pombe (strain 972 / ATCC 24843) (Fission yeast).